Here is a 92-residue protein sequence, read N- to C-terminus: Putative transmembrane protein ORF92 (92 aa).

The next 3 helical transmembrane spans lie at 11–28 (FVKGIVLLALTSGATYAI), 32–52 (FFSSNYCAIARIIQALLLFAS), and 54–74 (FLFDSAGALILGVIVLIIGVG).

The protein resides in the host membrane. The chain is Putative transmembrane protein ORF92 from Acidianus convivator (ABV).